The primary structure comprises 250 residues: Probable transcriptional regulatory protein SACE_2018 (250 aa).

The protein belongs to the TACO1 family.

The protein resides in the cytoplasm. The chain is Probable transcriptional regulatory protein SACE_2018 from Saccharopolyspora erythraea (strain ATCC 11635 / DSM 40517 / JCM 4748 / NBRC 13426 / NCIMB 8594 / NRRL 2338).